The sequence spans 125 residues: Fluoride-specific ion channel FluC (125 aa).

The next 4 helical transmembrane spans lie at 1 to 21, 32 to 52, 68 to 88, and 101 to 121; these read MIQALLVAVGGAIGSVLRYFV, AFPWGTLAVNVVGCFVIGVFA, LLITGFLGGFTTFSAFSLDAI, and IYIAASVGLSMAAVFAGLAIM. Positions 75 and 78 each coordinate Na(+).

The protein belongs to the fluoride channel Fluc/FEX (TC 1.A.43) family.

The protein resides in the cell inner membrane. It catalyses the reaction fluoride(in) = fluoride(out). With respect to regulation, na(+) is not transported, but it plays an essential structural role and its presence is essential for fluoride channel function. Its function is as follows. Fluoride-specific ion channel. Important for reducing fluoride concentration in the cell, thus reducing its toxicity. This Rhizobium etli (strain ATCC 51251 / DSM 11541 / JCM 21823 / NBRC 15573 / CFN 42) protein is Fluoride-specific ion channel FluC.